The primary structure comprises 606 residues: MAAESSYGFVYGVSGPVVTAEKMAGSAMYELVRVGHQELVGEIIRLEGDYATIQVYEETSGVTIGDPVLRTGKPLSVELGPGIMGSIFDGIQRPLKDIADITQSIYIPKGVSTNALSREARWDFVVSKDLRVGGHVTGGDIVGTVDENLLIKHKILLPPSACGTVTFVAPSGQYTVEDTLLELEFAGRKQKFSMLQVWPVRNPRPVTEKLAANNPLLCGQRVLDALFPCVQGGTTAIPGAFGCGKTVISQSLSKYSNSDAIIYVGCGERGNEMSEVLRDFPELTMEVNGTTTSIMKRTALVANTSNMPVAAREASIYTGITLAEYFRDMGLNVAMMADSTSRWAEALREISGRLGEMPADSGYPAYLAARLASFYERAGRVKCLGSPEREGSVTIVGAVSPPGGDFADPVTSATLGIVQVFWGLDKKLAQRKHFPSINWLISYSKYMRALEEFYEKNYPEFVHLRTKCKEILQEEEDLSEIVQLVGKASLAESDKITLEVAKIIKDDFLQQNGYTPYDRFCPFYKTVGMLKNMIGFYDLARHSVEATAQSENKITWNVIKDNMGDLIYQLSAMKFKDPVADGEAKIRKDYDDLAEAMANGFRNLED.

Residue 239–246 (GAFGCGKT) participates in ATP binding.

This sequence belongs to the ATPase alpha/beta chains family. V-ATPase is a heteromultimeric enzyme made up of two complexes: the ATP-hydrolytic V1 complex and the proton translocation V0 complex. The V1 complex consists of three catalytic AB heterodimers that form a heterohexamer, three peripheral stalks each consisting of EG heterodimers, one central rotor including subunits D and F, and the regulatory subunits C and H. The proton translocation complex V0 consists of the proton transport subunit a, a ring of proteolipid subunits c9c'', rotary subunit d, subunits e and f, and the accessory subunits vah-19/Ac45 and vah-20/PRR.

The catalysed reaction is ATP + H2O + 4 H(+)(in) = ADP + phosphate + 5 H(+)(out). Functionally, catalytic subunit of the V1 complex of vacuolar(H+)-ATPase (V-ATPase), a multisubunit enzyme composed of a peripheral complex (V1) that hydrolyzes ATP and a membrane integral complex (V0) that translocates protons. V-ATPase is responsible for acidifying and maintaining the pH of intracellular compartments and in some cell types, is targeted to the plasma membrane, where it is responsible for acidifying the extracellular environment. Required along with other vacuolar ATPase components for the removal of protein aggregates which form in immature oocytes in the distal gonad. This removal occurs as the oocytes mature and move to the proximal gonad, is triggered by the introduction of sperm through mating and occurs before fertilization. The introduction of sperm triggers V-ATPase accumulation in proximal oocytes and induces lysosomal acidification which leads to engulfing of protein aggregates by lysosomes and subsequent clearance of the aggregates. Lysosomal acidification also leads to changes in mitochondrial morphology and function. Mitochondria in distal immature oocytes are fragmented, produce high levels of reactive oxygen species (ROS) and have high membrane potential, indicative of metabolic inactivity. In contrast, mitochondria in proximal mature oocytes are tubular with lower ROS levels and membrane potential, indicative of an active metabolic state required for aggregate mobilization before clearance. Involved in receptor-mediated endocytosis. The sequence is that of V-type proton ATPase catalytic subunit A from Caenorhabditis briggsae.